A 187-amino-acid polypeptide reads, in one-letter code: Ribosome-recycling factor (187 aa).

The protein belongs to the RRF family.

It localises to the cytoplasm. In terms of biological role, responsible for the release of ribosomes from messenger RNA at the termination of protein biosynthesis. May increase the efficiency of translation by recycling ribosomes from one round of translation to another. In Parvibaculum lavamentivorans (strain DS-1 / DSM 13023 / NCIMB 13966), this protein is Ribosome-recycling factor.